Reading from the N-terminus, the 119-residue chain is Beta-2-microglobulin (119 aa).

An N-terminal signal peptide occupies residues 1 to 20 (MARSVVVALLVLLSLSGLEA). The Ig-like C1-type domain maps to 25 to 114 (PKIQVYSRHP…VTFSTPKTVK (90 aa)). Cys-45 and Cys-100 are joined by a disulfide.

It belongs to the beta-2-microglobulin family. In terms of assembly, heterodimer of an alpha chain and a beta chain. Beta-2-microglobulin is the beta-chain of major histocompatibility complex class I molecules.

The protein localises to the secreted. Functionally, component of the class I major histocompatibility complex (MHC). Involved in the presentation of peptide antigens to the immune system. This Ateles paniscus (Black spider monkey) protein is Beta-2-microglobulin (B2M).